Reading from the N-terminus, the 623-residue chain is Serine/threonine-protein kinase MAK (623 aa).

The Protein kinase domain occupies Tyr-4 to Phe-284. ATP contacts are provided by residues Leu-10 to Val-18 and Lys-33. Asp-125 acts as the Proton acceptor in catalysis. Position 157 is a phosphothreonine; by autocatalysis (Thr-157). Tyr-159 bears the Phosphotyrosine; by autocatalysis mark. Disordered stretches follow at residues Ile-328–Trp-396 and Gly-416–Glu-469. Positions Gln-356 to Gln-369 are enriched in low complexity. Over residues Ser-446–Asn-455 the composition is skewed to polar residues.

The protein belongs to the protein kinase superfamily. CMGC Ser/Thr protein kinase family. CDC2/CDKX subfamily. As to quaternary structure, interacts with RP1. Interacts with AR and CDK20. Found in a complex containing MAK, AR and NCOA3. Interacts with FZR1 (via WD repeats). The cofactor is Mg(2+). In terms of processing, autophosphorylated. Phosphorylated on serine and threonine residues. As to expression, expressed in prostate cancer cell lines at generally higher levels than in normal prostate epithelial cell lines. Isoform 1 is expressed in kidney, testis, lung, trachea, and retina. Isoform 2 is retina-specific where it is expressed in rod and cone photoreceptors.

The protein localises to the nucleus. It localises to the cytoplasm. It is found in the cytoskeleton. Its subcellular location is the microtubule organizing center. The protein resides in the centrosome. The protein localises to the spindle. It localises to the midbody. It is found in the cell projection. Its subcellular location is the cilium. The protein resides in the photoreceptor outer segment. The protein localises to the photoreceptor inner segment. It carries out the reaction L-seryl-[protein] + ATP = O-phospho-L-seryl-[protein] + ADP + H(+). The catalysed reaction is L-threonyl-[protein] + ATP = O-phospho-L-threonyl-[protein] + ADP + H(+). In terms of biological role, essential for the regulation of ciliary length and required for the long-term survival of photoreceptors. Phosphorylates FZR1 in a cell cycle-dependent manner. Plays a role in the transcriptional coactivation of AR. Could play an important function in spermatogenesis. May play a role in chromosomal stability in prostate cancer cells. The polypeptide is Serine/threonine-protein kinase MAK (MAK) (Homo sapiens (Human)).